We begin with the raw amino-acid sequence, 87 residues long: MVKNAFISVISQEENRGSVEFQVVSFTNKIRRLTSHLEFHRKDFLSQRGLRKILGKRQRLLSYLSKKDKVRYTELISQLDIRELTTR.

The protein belongs to the universal ribosomal protein uS15 family. Part of the 30S ribosomal subunit.

It localises to the plastid. The protein resides in the chloroplast. This Oenothera glazioviana (Large-flowered evening primrose) protein is Small ribosomal subunit protein uS15c (rps15).